The sequence spans 146 residues: Angiogenin (146 aa).

Residues 1–24 (MVMGLGLFLLVFMLGLGLTPPTLA) form the signal peptide. Q25 is modified (pyrrolidone carboxylic acid). Residue H37 is the Proton acceptor of the active site. TRNA is bound at residue R45. Disulfide bonds link C50-C105, C63-C116, and C81-C131. Positions 55–59 (RRRGL) match the Nucleolar localization signal motif. The tRNA site is built by C105 and I127. Catalysis depends on H138, which acts as the Proton donor.

Belongs to the pancreatic ribonuclease family. Homodimer. Interacts with RNH1; inhibiting ANG ribonuclease activity. Interacts with PCNA.

The protein resides in the secreted. The protein localises to the nucleus. It is found in the nucleolus. It localises to the cytoplasm. Its subcellular location is the stress granule. With respect to regulation, has weak tRNA ribonuclease activity by itself due to partial autoinhibition by its C-terminus, which folds into a short alpha-helix that partially occludes the substrate-binding site. In absence of stress, the ribonuclease activity is inhibited by RNH1 in the cytoplasm. In response to stress, dissociates from RNH1 in the cytoplasm and associates with cytoplasmic ribosomes with vacant A-sites: ribosomes directly activate the tRNA ribonuclease activity of ANG by refolding the C-terminal alpha-helix. In response to stress, the angiogenic activity of ANG is inhibited by RNH1 in the nucleus. In terms of biological role, secreted ribonuclease that can either promote or restrict cell proliferation of target cells, depending on the context. Endocytosed in target cells via its receptor PLXNB2 and translocates to the cytoplasm or nucleus. Under stress conditions, localizes to the cytoplasm and promotes the assembly of stress granules (SGs): specifically cleaves a subset of tRNAs within anticodon loops to produce tRNA-derived stress-induced fragments (tiRNAs), resulting in translation repression and inhibition of cell proliferation. tiRNas also prevent formation of apoptosome, thereby promoting cell survival. Preferentially cleaves RNAs between a pyrimidine and an adenosine residue, suggesting that it cleaves the anticodon loop of tRNA(Ala) (32-UUAGCAU-38) after positions 33 and 36. Cleaves a subset of tRNAs, including tRNA(Ala), tRNA(Glu), tRNA(Gly), tRNA(Lys), tRNA(Val), tRNA(His), tRNA(Asp) and tRNA(Sec). Under growth conditions and in differentiated cells, translocates to the nucleus and stimulates ribosomal RNA (rRNA) transcription, including that containing the initiation site sequences of 45S rRNA, thereby promoting cell growth and proliferation. Angiogenin induces vascularization of normal and malignant tissues via its ability to promote rRNA transcription. Involved in hematopoietic stem and progenitor cell (HSPC) growth and survival by promoting rRNA transcription in growth conditions and inhibiting translation in response to stress, respectively. Mediates the crosstalk between myeloid and intestinal epithelial cells to protect the intestinal epithelial barrier integrity: secreted by myeloid cells and promotes intestinal epithelial cells proliferation and survival. Also mediates osteoclast-endothelial cell crosstalk in growing bone: produced by osteoclasts and protects the neighboring vascular cells against senescence by promoting rRNA transcription. The protein is Angiogenin (ANG) of Rhinopithecus avunculus (Tonkin snub-nosed monkey).